The following is a 240-amino-acid chain: EF-hand domain-containing protein D2 (240 aa).

A disordered region spans residues 1-51; the sequence is MATDELASKLSRRLQMEGEGGEATEQPGLNGAAAAAAAEAPDETAQALGSA. Alanine 2 carries the N-acetylalanine modification. Serine 11 bears the Phosphoserine mark. Positions 32–47 are enriched in low complexity; that stretch reads AAAAAAAEAPDETAQA. 2 positions are modified to phosphoserine: serine 74 and serine 76. Tyrosine 83 carries the post-translational modification Phosphotyrosine. EF-hand domains lie at 92–127 and 128–163; these read KQIKDMEKMFKQYDAGRDGFIDLMELKLMMEKLGAP and QTHLGLKSMIQEVDEDFDSKLSFREFLLIFRKAAAG. Residues aspartate 105, aspartate 109, glutamate 116, aspartate 141, aspartate 143, aspartate 145, lysine 147, and glutamate 152 each coordinate Ca(2+). At lysine 233 the chain carries N6-acetyllysine.

In terms of assembly, interacts with CASP9; with inactive form. As to expression, detected in thymus, kidney, spleen, lung, liver and brain. Highest abundance in brain and lowest in kidney and thymus.

The protein localises to the membrane raft. Functionally, may regulate B-cell receptor (BCR)-induced immature and primary B-cell apoptosis. Plays a role as negative regulator of the canonical NF-kappa-B-activating branch. Controls spontaneous apoptosis through the regulation of BCL2L1 abundance. The protein is EF-hand domain-containing protein D2 (Efhd2) of Mus musculus (Mouse).